The chain runs to 149 residues: Large ribosomal subunit protein uL13 (149 aa).

It belongs to the universal ribosomal protein uL13 family. In terms of assembly, part of the 50S ribosomal subunit.

Functionally, this protein is one of the early assembly proteins of the 50S ribosomal subunit, although it is not seen to bind rRNA by itself. It is important during the early stages of 50S assembly. The chain is Large ribosomal subunit protein uL13 from Prosthecochloris aestuarii (strain DSM 271 / SK 413).